The following is a 444-amino-acid chain: Serine--tRNA ligase (444 aa).

248 to 250 (TSE) serves as a coordination point for L-serine. Position 279 to 281 (279 to 281 (RSE)) interacts with ATP. E302 contributes to the L-serine binding site. ATP is bound at residue 366–369 (EISS). S401 contacts L-serine.

Belongs to the class-II aminoacyl-tRNA synthetase family. Type-1 seryl-tRNA synthetase subfamily. In terms of assembly, homodimer. The tRNA molecule binds across the dimer.

It localises to the cytoplasm. The enzyme catalyses tRNA(Ser) + L-serine + ATP = L-seryl-tRNA(Ser) + AMP + diphosphate + H(+). It catalyses the reaction tRNA(Sec) + L-serine + ATP = L-seryl-tRNA(Sec) + AMP + diphosphate + H(+). It participates in aminoacyl-tRNA biosynthesis; selenocysteinyl-tRNA(Sec) biosynthesis; L-seryl-tRNA(Sec) from L-serine and tRNA(Sec): step 1/1. Functionally, catalyzes the attachment of serine to tRNA(Ser). Is also able to aminoacylate tRNA(Sec) with serine, to form the misacylated tRNA L-seryl-tRNA(Sec), which will be further converted into selenocysteinyl-tRNA(Sec). The polypeptide is Serine--tRNA ligase (Polaromonas naphthalenivorans (strain CJ2)).